The sequence spans 132 residues: Small ribosomal subunit protein uS9 (132 aa).

The tract at residues 104–132 is disordered; it reads GYLTRDPRMKERKKYGLRKARRAPQFSKR. The segment covering 113–132 has biased composition (basic residues); the sequence is KERKKYGLRKARRAPQFSKR.

The protein belongs to the universal ribosomal protein uS9 family.

This is Small ribosomal subunit protein uS9 from Natranaerobius thermophilus (strain ATCC BAA-1301 / DSM 18059 / JW/NM-WN-LF).